The primary structure comprises 269 residues: S-adenosylmethionine decarboxylase proenzyme (269 aa).

Ser118 functions as the Schiff-base intermediate with substrate; via pyruvic acid in the catalytic mechanism. The residue at position 118 (Ser118) is a Pyruvic acid (Ser); by autocatalysis. His123 (proton acceptor; for processing activity) is an active-site residue. Cys146 functions as the Proton donor; for catalytic activity in the catalytic mechanism.

The protein belongs to the prokaryotic AdoMetDC family. Type 2 subfamily. As to quaternary structure, heterooctamer of four alpha and four beta chains arranged as a tetramer of alpha/beta heterodimers. Requires pyruvate as cofactor. In terms of processing, is synthesized initially as an inactive proenzyme. Formation of the active enzyme involves a self-maturation process in which the active site pyruvoyl group is generated from an internal serine residue via an autocatalytic post-translational modification. Two non-identical subunits are generated from the proenzyme in this reaction, and the pyruvate is formed at the N-terminus of the alpha chain, which is derived from the carboxyl end of the proenzyme. The post-translation cleavage follows an unusual pathway, termed non-hydrolytic serinolysis, in which the side chain hydroxyl group of the serine supplies its oxygen atom to form the C-terminus of the beta chain, while the remainder of the serine residue undergoes an oxidative deamination to produce ammonia and the pyruvoyl group blocking the N-terminus of the alpha chain.

It catalyses the reaction S-adenosyl-L-methionine + H(+) = S-adenosyl 3-(methylsulfanyl)propylamine + CO2. It functions in the pathway amine and polyamine biosynthesis; S-adenosylmethioninamine biosynthesis; S-adenosylmethioninamine from S-adenosyl-L-methionine: step 1/1. Catalyzes the decarboxylation of S-adenosylmethionine to S-adenosylmethioninamine (dcAdoMet), the propylamine donor required for the synthesis of the polyamines spermine and spermidine from the diamine putrescine. The chain is S-adenosylmethionine decarboxylase proenzyme from Brevibacillus brevis (strain 47 / JCM 6285 / NBRC 100599).